The primary structure comprises 122 residues: Large ribosomal subunit protein uL18 (122 aa).

This sequence belongs to the universal ribosomal protein uL18 family. Part of the 50S ribosomal subunit; part of the 5S rRNA/L5/L18/L25 subcomplex. Contacts the 5S and 23S rRNAs.

Functionally, this is one of the proteins that bind and probably mediate the attachment of the 5S RNA into the large ribosomal subunit, where it forms part of the central protuberance. This chain is Large ribosomal subunit protein uL18, found in Mycobacterium avium (strain 104).